Consider the following 164-residue polypeptide: CASP-like protein 1C1 (164 aa).

Residues 1 to 15 (MGDVEIPPLVKQIVR) lie on the Cytoplasmic side of the membrane. Residues 16-36 (GLRGLAFLATILATSFMAASH) form a helical membrane-spanning segment. At 37-56 (ERAIFPFDYKADYTDLMLFK) the chain is on the extracellular side. Residues 57–77 (AFLGANIAASLYSFFFVCLPP) traverse the membrane as a helical segment. The Cytoplasmic segment spans residues 78–83 (KSLLWR). Residues 84 to 104 (LAIVLDVIMFGLLVAMDSAAI) form a helical membrane-spanning segment. At 105-132 (AAAYLHKHGDSQAFWPPICSQVPTYCYR) the chain is on the extracellular side. The helical transmembrane segment at 133 to 153 (VILAISIGFGGVFMFLLIIII) threads the bilayer. Residues 154–164 (SISVILNPLLV) lie on the Cytoplasmic side of the membrane.

This sequence belongs to the Casparian strip membrane proteins (CASP) family. As to quaternary structure, homodimer and heterodimers.

It localises to the cell membrane. This Populus trichocarpa (Western balsam poplar) protein is CASP-like protein 1C1.